The sequence spans 854 residues: DNA gyrase subunit A (854 aa).

A Topo IIA-type catalytic domain is found at 42–510 (LPEVRDGLKP…ADGQVSDEDL (469 aa)). The active-site O-(5'-phospho-DNA)-tyrosine intermediate is Y129. Positions 537-543 (QKRGGKG) match the GyrA-box motif.

This sequence belongs to the type II topoisomerase GyrA/ParC subunit family. In terms of assembly, heterotetramer, composed of two GyrA and two GyrB chains. In the heterotetramer, GyrA contains the active site tyrosine that forms a transient covalent intermediate with DNA, while GyrB binds cofactors and catalyzes ATP hydrolysis.

The protein resides in the cytoplasm. The catalysed reaction is ATP-dependent breakage, passage and rejoining of double-stranded DNA.. With respect to regulation, DNA supercoiling is inhibited by the coumarin antibiotic novobiocin. Also inhibited by the fluoroquinolones ciprofloxacin and moxifloxacin. Its function is as follows. A type II topoisomerase that negatively supercoils closed circular double-stranded (ds) DNA in an ATP-dependent manner to modulate DNA topology and maintain chromosomes in an underwound state; also catalyzes the interconversion of other topological isomers of double-stranded DNA rings, including catenanes. At comparable concentrations has a stronger decatenation activity than E.coli, which is inhibited by ciprofloxacin and novobiocin. Cleaves dsDNA at the sequence 5'-AT/GGCC-3', leaving a 4 base overhang. Relaxes negatively supercoiled DNA in an ATP-independent manner. In terms of biological role, negative supercoiling favors strand separation, and DNA replication, transcription, recombination and repair, all of which involve strand separation. Type II topoisomerases break and join 2 DNA strands simultaneously in an ATP-dependent manner. This chain is DNA gyrase subunit A, found in Mycolicibacterium smegmatis (Mycobacterium smegmatis).